We begin with the raw amino-acid sequence, 864 residues long: Sine oculis-binding protein homolog (864 aa).

Over residues 1–14 (MAEMEKEGRPPENK) the composition is skewed to basic and acidic residues. The segment at 1–25 (MAEMEKEGRPPENKRSRKPAHPVKR) is disordered. FCS-type zinc fingers lie at residues 142–180 (DEVSNVQIMCAWCQKVGIKRYSLSMGSEVKSFCSEKCFA) and 216–256 (FKNN…KCLN). 3 disordered regions span residues 304-360 (LTDA…ETPS), 413-484 (RGPP…PGAP), and 550-616 (KPPN…RGRG). 2 stretches are compositionally biased toward low complexity: residues 314 to 335 (PVAAAGQSQGPGPSSSTTVSPS) and 417 to 433 (HHASNPNSPLSNPMLPG). The segment covering 460-484 (IHPPSTPTMPGNPPGLLPPPPPGAP) has biased composition (pro residues). 2 stretches are compositionally biased toward low complexity: residues 565–582 (SAPGDSSAAGGKAGGRSL) and 590–603 (GSSKSADSPPGSSG). Residues 618 to 622 (VVDLT) carry the SUMO interaction motif 1 (SIM); mediates the binding to polysumoylated substrates motif. Residue S627 is modified to Phosphoserine. Positions 648–652 (VIDLT) match the SUMO interaction motif 2 (SIM); mediates the binding to polysumoylated substrates motif. K672 is covalently cross-linked (Glycyl lysine isopeptide (Lys-Gly) (interchain with G-Cter in SUMO2)). S694 carries the phosphoserine modification. The tract at residues 725-750 (APAEAKGAEPPPEQPPPPAPPKKLLS) is disordered. A compositionally biased stretch (pro residues) spans 733–745 (EPPPEQPPPPAPP).

This sequence belongs to the SOBP family. As to quaternary structure, interacts (via SIM domains) with SUMO1 and SUMO2.

Its function is as follows. Implicated in development of the cochlea. This Rattus norvegicus (Rat) protein is Sine oculis-binding protein homolog.